A 343-amino-acid chain; its full sequence is Palmitoyltransferase ZDHHC4 (343 aa).

The Lumenal portion of the chain corresponds to 1-2 (MD). Residues 3-23 (FLVLFLLYLALVLLGFVMICI) traverse the membrane as a helical segment. Over 24–67 (GSKTHYLQGLISRGAQVFSYIIPECLQRAMLSVLHYLFHTRNYT) the chain is Cytoplasmic. Residues 68-88 (FVVLHLILQGMVYTEYTWEIF) traverse the membrane as a helical segment. Over 89–95 (GLCQQLE) the chain is Lumenal. The helical transmembrane segment at 96–116 (FSLYYLFLPYLLLIVNLLFFT) threads the bilayer. Topologically, residues 117 to 196 (LSCVTNPGTI…GAWNTRYFLS (80 aa)) are cytoplasmic. Residues 149 to 199 (VRCPTCDLRKPARSKHCSVCNRCVHRFDHHCVWVNNCIGAWNTRYFLSYLF) form the DHHC domain. C179 serves as the catalytic S-palmitoyl cysteine intermediate. A helical transmembrane segment spans residues 197-217 (YLFTLTASAATMAVVSTVFLV). Residues 218–255 (RLVVMSDVYLQTYVDDLGHLQVVDTVFLVQYLFLTFPR) are Lumenal-facing. Residues 256-276 (IVFLVGFVVVLSFLLGGYLCF) traverse the membrane as a helical segment. Topologically, residues 277–343 (CLYLAATNQT…ATACYERKEK (67 aa)) are cytoplasmic. The short motif at 340-343 (RKEK) is the Di-lysine motif element.

It belongs to the DHHC palmitoyltransferase family. In terms of assembly, interacts with CPT1A.

The protein localises to the endoplasmic reticulum membrane. The protein resides in the golgi apparatus membrane. Its subcellular location is the cell membrane. It carries out the reaction L-cysteinyl-[protein] + hexadecanoyl-CoA = S-hexadecanoyl-L-cysteinyl-[protein] + CoA. In terms of biological role, palmitoyltransferase that could catalyze the addition of palmitate onto protein substrates including the D(2) dopamine receptor DRD2, GSK3B or MAVS. Mediates GSK3B palmitoylation to prevent its AKT1-mediated phosphorylation leading to activation of the STAT3 signaling pathway. Also catalyzes MAVS palmitoylation which promotes its stabilization and activation by inhibiting 'Lys-48'- but facilitating 'Lys-63'-linked ubiquitination. This chain is Palmitoyltransferase ZDHHC4, found in Bos taurus (Bovine).